The primary structure comprises 787 residues: Dolichyl-diphosphooligosaccharide--protein glycosyltransferase subunit STT3A (787 aa).

At 1-18 (MAEPESSTAAAGGSRLRN) the chain is on the cytoplasmic side. A helical membrane pass occupies residues 19–39 (ACGGVLCAFTLLLIGVLAFSI). The Lumenal segment spans residues 40–125 (RLFSVIKYES…LSVETVCVFT (86 aa)). A DXD motif 1 motif is present at residues 53 to 55 (EFD). Asp55 contributes to the Mn(2+) binding site. Residues 126-144 (APIFSANASWATYLLTKEA) form a helical membrane-spanning segment. The Cytoplasmic segment spans residues 145-146 (KG). Residues 147 to 164 (TGAGLMAAAILAMVPSYI) traverse the membrane as a helical segment. Residues 165 to 175 (SRSVAGSYDNE) lie on the Lumenal side of the membrane. 2 residues coordinate Mn(2+): Asp173 and Glu175. Residues 173-175 (DNE) carry the DXD motif 2 motif. Residues 176–195 (AVAIFALIFTFYLYVKTLNT) traverse the membrane as a helical segment. Over 196 to 197 (GS) the chain is Cytoplasmic. Residues 198–212 (LFYATLNALSYFYMV) form a helical membrane-spanning segment. At 213–217 (CSWGG) the chain is on the lumenal side. A helical membrane pass occupies residues 218 to 234 (YTFIINLIPIHVLLCIV). The Cytoplasmic segment spans residues 235 to 239 (TGRYS). A helical transmembrane segment spans residues 240 to 265 (SRLYIAYAPLVILGTLLAALVPVVGF). At 266 to 273 (NAVMTSEH) the chain is on the lumenal side. The chain crosses the membrane as a helical span at residues 274–293 (FASFLVFIILHVVALVYYIK). Residues 294 to 306 (GLLTPRLFKVAMT) lie on the Cytoplasmic side of the membrane. Residues 307–327 (LVITVGLAVCFAVIAILIALV) traverse the membrane as a helical segment. The Lumenal portion of the chain corresponds to 328 to 365 (ASSPTKGWSGRSLSLLDPTYASKYIPIIASVSEHQPPT). An SVSE motif motif is present at residues 357 to 360 (SVSE). The chain crosses the membrane as a helical span at residues 366–388 (WPSYFMDINVLAFLIPAGIISCF). Topologically, residues 389-394 (LPLSDA) are cytoplasmic. The chain crosses the membrane as a helical span at residues 395–411 (SSFVVLYLVTAVYFSGV). Residues 412–415 (MVRL) lie on the Lumenal side of the membrane. Arg414 is a binding site for dolichyl diphosphooligosaccharide. A helical membrane pass occupies residues 416-437 (MLVLAPAACILSGIALSEAFDV). The Cytoplasmic portion of the chain corresponds to 438–525 (LTRSVKYQLS…KLLVLPMEAS (88 aa)). Residues 453–475 (SPAASGDSSAESSSASTVSTNSA) show a composition bias toward low complexity. The disordered stretch occupies residues 453-507 (SPAASGDSSAESSSASTVSTNSAKNETRPEKTETAPKEKPSKKNRKKEKEVAESV). Residues 477–504 (NETRPEKTETAPKEKPSKKNRKKEKEVA) show a composition bias toward basic and acidic residues. Residues 526–546 (VLGILLLIVLGGFYVVHCVWA) form a helical membrane-spanning segment. Over 547 to 787 (AAEAYSAPSI…AAGRKKNPWQ (241 aa)) the chain is Lumenal. Residues 592-594 (WWD) form an interacts with target acceptor peptide in protein substrate region. The short motif at 592–596 (WWDYG) is the WWDYG motif element. Residue Tyr597 coordinates dolichyl diphosphooligosaccharide. 2 N-linked (GlcNAc...) asparagine glycosylation sites follow: Asn604 and Asn611. N-linked (GlcNAc...) (high mannose) asparagine glycosylation occurs at Asn615. The short motif at 659 to 666 (DINKFLWM) is the DK motif element. Over residues 759–769 (RVRGKLKKLKS) the composition is skewed to basic residues. The tract at residues 759-787 (RVRGKLKKLKSGSKASSTNAAGRKKNPWQ) is disordered.

This sequence belongs to the STT3 family. As to quaternary structure, component of the oligosaccharyltransferase (OST) complex. Mg(2+) serves as cofactor. It depends on Mn(2+) as a cofactor.

It localises to the endoplasmic reticulum membrane. It catalyses the reaction a di-trans,poly-cis-dolichyl diphosphooligosaccharide + L-asparaginyl-[protein] = N(4)-(oligosaccharide-(1-&gt;4)-N-acetyl-beta-D-glucosaminyl-(1-&gt;4)-N-acetyl-beta-D-glucosaminyl)-L-asparaginyl-[protein] + a di-trans,poly-cis-dolichyl diphosphate + H(+). The protein operates within protein modification; protein glycosylation. Functionally, catalytic subunit of the oligosaccharyl transferase (OST) complex that catalyzes the initial transfer of a defined glycan (Glc(3)Man(9)GlcNAc(2) in eukaryotes) from the lipid carrier dolichol-pyrophosphate to an asparagine residue within an Asn-X-Ser/Thr consensus motif in nascent polypeptide chains, the first step in protein N-glycosylation. N-glycosylation occurs cotranslationally and the complex associates with the Sec61 complex at the channel-forming translocon complex that mediates protein translocation across the endoplasmic reticulum (ER). All subunits are required for a maximal enzyme activity. This subunit contains the active site and the acceptor peptide and donor lipid-linked oligosaccharide (LLO) binding pockets. The chain is Dolichyl-diphosphooligosaccharide--protein glycosyltransferase subunit STT3A (STT3A) from Oryza sativa subsp. japonica (Rice).